The following is a 469-amino-acid chain: 1-aminocyclopropane-1-carboxylate synthase 3 (469 aa).

Position 272 is an N6-(pyridoxal phosphate)lysine (lysine 272). The interval 432–452 (APNATNHQNQQQSNANSKKKS) is disordered. Positions 437–447 (NHQNQQQSNAN) are enriched in low complexity.

It belongs to the class-I pyridoxal-phosphate-dependent aminotransferase family. In terms of assembly, homodimer. Pyridoxal 5'-phosphate serves as cofactor.

The catalysed reaction is S-adenosyl-L-methionine = 1-aminocyclopropane-1-carboxylate + S-methyl-5'-thioadenosine + H(+). The protein operates within alkene biosynthesis; ethylene biosynthesis via S-adenosyl-L-methionine; ethylene from S-adenosyl-L-methionine: step 1/2. Catalyzes the formation of 1-aminocyclopropane-1-carboxylate, a direct precursor of ethylene in higher plants. This Solanum lycopersicum (Tomato) protein is 1-aminocyclopropane-1-carboxylate synthase 3 (ACS3).